The following is a 148-amino-acid chain: MRGRELPLVLLALVLCLAPRGRAVPLPAGGGTVLTKMYPRGNHWAVGHLMGKKSTGESSSVSERGSLKQQLREYIRWEEAARNLLGLIEAKENRNHQPPQPKALGNQQPSWDSEDSSNFKDVGSKGKVGRLSAPGSQREGRNPQLNQQ.

The signal sequence occupies residues 1–23; sequence MRGRELPLVLLALVLCLAPRGRA. Met50 bears the Methionine amide mark. Positions 54–148 are excised as a propeptide; that stretch reads STGESSSVSE…EGRNPQLNQQ (95 aa). Positions 89 to 148 are disordered; sequence EAKENRNHQPPQPKALGNQQPSWDSEDSSNFKDVGSKGKVGRLSAPGSQREGRNPQLNQQ.

It belongs to the bombesin/neuromedin-B/ranatensin family.

The protein resides in the secreted. It localises to the cytoplasmic vesicle. It is found in the secretory vesicle lumen. Its subcellular location is the cell projection. The protein localises to the neuron projection. Its function is as follows. Stimulates the release of gastrin and other gastrointestinal hormones. Contributes to the perception of prurient stimuli and to the transmission of itch signals in the spinal cord that promote scratching behavior. Contributes primarily to nonhistaminergic itch sensation. In one study, shown to act in the amygdala as part of an inhibitory network which inhibits memory specifically related to learned fear. In another study, shown to act on vasoactive intestinal peptide (VIP)-expressing cells in the auditory cortex, most likely via extrasynaptic diffusion from local and long-range sources, to mediate disinhibition of glutamatergic cells via VIP cell-specific GRPR signaling which leads to enhanced auditory fear memories. Contributes to the regulation of food intake. Inhibits voltage-gated sodium channels but enhances voltage-gated potassium channels in hippocampal neurons. Induces sighing by acting directly on the pre-Botzinger complex, a cluster of several thousand neurons in the ventrolateral medulla responsible for inspiration during respiratory activity. Induces an itch response through activation of receptors present on mast cells, triggering mast cell degranulation. This chain is Gastrin-releasing peptide (GRP), found in Homo sapiens (Human).